A 489-amino-acid chain; its full sequence is Corticosteroid-binding protein (489 aa).

The protein to yeast FMS1.

May be a flavoprotein with enzymatic activity. This chain is Corticosteroid-binding protein (CBP1), found in Candida albicans (strain SC5314 / ATCC MYA-2876) (Yeast).